A 395-amino-acid polypeptide reads, in one-letter code: NAD(P)H-quinone oxidoreductase subunit H (395 aa).

The protein belongs to the complex I 49 kDa subunit family. NDH-1 can be composed of about 15 different subunits; different subcomplexes with different compositions have been identified which probably have different functions.

Its subcellular location is the cellular thylakoid membrane. The catalysed reaction is a plastoquinone + NADH + (n+1) H(+)(in) = a plastoquinol + NAD(+) + n H(+)(out). It carries out the reaction a plastoquinone + NADPH + (n+1) H(+)(in) = a plastoquinol + NADP(+) + n H(+)(out). NDH-1 shuttles electrons from an unknown electron donor, via FMN and iron-sulfur (Fe-S) centers, to quinones in the respiratory and/or the photosynthetic chain. The immediate electron acceptor for the enzyme in this species is believed to be plastoquinone. Couples the redox reaction to proton translocation, and thus conserves the redox energy in a proton gradient. Cyanobacterial NDH-1 also plays a role in inorganic carbon-concentration. The polypeptide is NAD(P)H-quinone oxidoreductase subunit H (Prochlorococcus marinus (strain MIT 9515)).